A 635-amino-acid polypeptide reads, in one-letter code: MHLSEITHPKQLHNLSIHQLEEIARQIREKHLETVATSGGHLGPGLGVVELTLGLYQTLNLDRDKVIWDVGHQAYPHKIITGRYHNFHTLRQKDGIAGYLKRCESKFDHFGAGHASTSISAGLGMALARDMKGDNFKVVSIIGDGALTGGMALEAINHAGHLPKTNILVVLNDNEMSISPNVGAISRYLNKMRLSPPIQFLQDNLEEQFKQIPFVGETFTPEMEGLKGGMKRLAVSKVGAVIEELGFTYMGPVDGHNLEELITTFNQAHQIPGPVLVHVATTKGKGYPVAEEDKVSYHAQNPFNLATGKALPASKPKPPKYSKVFAHTLVKLAENNPKIIGITAAMATGTGLDKLHGKLPKQYIDVGIAEQHAVTLAAGLASEGMRPVVCIYSTFLQRAYDQIIHDVCIQKLPVFFCLDRAGIVGADGPTHQGMYDIAYLRCIPNMVVMAPKDEGELQRMVLTGIKHTDGAIAMRYPRGNGYGVPLMEEGWEAITIGKGEILRNGDDVLILGYGSMVYSAMQTAEILSEHGVAATVVNARFVKPLDTELILPLAQRIGQVVTMEEGCLMGGFGSAVTEALMDNNVLVPVLRLGVPDKLVDHAKPDESKADLGLTPSQMAERILQSFKPRLSTINV.

Thiamine diphosphate contacts are provided by residues H72 and G113–A115. Residue D144 coordinates Mg(2+). Thiamine diphosphate is bound by residues G145–A146, N174, Y287, and E370. N174 contributes to the Mg(2+) binding site.

The protein belongs to the transketolase family. DXPS subfamily. As to quaternary structure, homodimer. Mg(2+) is required as a cofactor. The cofactor is thiamine diphosphate.

It carries out the reaction D-glyceraldehyde 3-phosphate + pyruvate + H(+) = 1-deoxy-D-xylulose 5-phosphate + CO2. The protein operates within metabolic intermediate biosynthesis; 1-deoxy-D-xylulose 5-phosphate biosynthesis; 1-deoxy-D-xylulose 5-phosphate from D-glyceraldehyde 3-phosphate and pyruvate: step 1/1. Its function is as follows. Catalyzes the acyloin condensation reaction between C atoms 2 and 3 of pyruvate and glyceraldehyde 3-phosphate to yield 1-deoxy-D-xylulose-5-phosphate (DXP). In Trichodesmium erythraeum (strain IMS101), this protein is 1-deoxy-D-xylulose-5-phosphate synthase.